The sequence spans 166 residues: NAD(P)H-quinone oxidoreductase subunit I, chloroplastic (166 aa).

4Fe-4S ferredoxin-type domains lie at 55–84 (GRIHFEFDKCIACEVCVRVCPIDLPVVDWK) and 95–124 (LNYSIDFGICIFCGHCVEYCPTNCLSMTEE). Residues cysteine 64, cysteine 67, cysteine 70, cysteine 74, cysteine 104, cysteine 107, cysteine 110, and cysteine 114 each contribute to the [4Fe-4S] cluster site.

Belongs to the complex I 23 kDa subunit family. NDH is composed of at least 16 different subunits, 5 of which are encoded in the nucleus. The cofactor is [4Fe-4S] cluster.

The protein resides in the plastid. Its subcellular location is the chloroplast thylakoid membrane. It catalyses the reaction a plastoquinone + NADH + (n+1) H(+)(in) = a plastoquinol + NAD(+) + n H(+)(out). The enzyme catalyses a plastoquinone + NADPH + (n+1) H(+)(in) = a plastoquinol + NADP(+) + n H(+)(out). Its function is as follows. NDH shuttles electrons from NAD(P)H:plastoquinone, via FMN and iron-sulfur (Fe-S) centers, to quinones in the photosynthetic chain and possibly in a chloroplast respiratory chain. The immediate electron acceptor for the enzyme in this species is believed to be plastoquinone. Couples the redox reaction to proton translocation, and thus conserves the redox energy in a proton gradient. The protein is NAD(P)H-quinone oxidoreductase subunit I, chloroplastic of Perymeniopsis ovalifolia.